Here is a 352-residue protein sequence, read N- to C-terminus: 4-hydroxy-3-methylbut-2-en-1-yl diphosphate synthase (flavodoxin) (352 aa).

Positions 265, 268, 300, and 307 each coordinate [4Fe-4S] cluster.

Belongs to the IspG family. It depends on [4Fe-4S] cluster as a cofactor.

The enzyme catalyses (2E)-4-hydroxy-3-methylbut-2-enyl diphosphate + oxidized [flavodoxin] + H2O + 2 H(+) = 2-C-methyl-D-erythritol 2,4-cyclic diphosphate + reduced [flavodoxin]. The protein operates within isoprenoid biosynthesis; isopentenyl diphosphate biosynthesis via DXP pathway; isopentenyl diphosphate from 1-deoxy-D-xylulose 5-phosphate: step 5/6. Its function is as follows. Converts 2C-methyl-D-erythritol 2,4-cyclodiphosphate (ME-2,4cPP) into 1-hydroxy-2-methyl-2-(E)-butenyl 4-diphosphate. The polypeptide is 4-hydroxy-3-methylbut-2-en-1-yl diphosphate synthase (flavodoxin) (Persephonella marina (strain DSM 14350 / EX-H1)).